Here is a 657-residue protein sequence, read N- to C-terminus: Single-minded homolog 2 (657 aa).

In terms of domain architecture, bHLH spans 1–53; sequence MKEKSKNAAKTRREKENGEFYELAKLLPLPSAITSQLDKASIIRLTTSYLKMR. PAS domains are found at residues 77–147 and 218–288; these read AKEL…PPLH and PPSA…LVKG. The 71-residue stretch at 218–288 folds into the PAC domain; the sequence is PPSAITEIKL…YAHHLLLVKG (71 aa). In terms of domain architecture, Single-minded C-terminal spans 336 to 657; sequence EYKELQLSLD…GASVIITNGR (322 aa). The span at 354-364 shows a compositional bias: polar residues; the sequence is ESWRTTLSTSQ. Disordered regions lie at residues 354–387 and 612–641; these read ESWR…NPYP and LGSA…APGA. The short motif at 367–386 is the Nuclear localization signal element; that stretch reads RKSAKPKNTKMKTKLRTNPY. A compositionally biased stretch (basic residues) spans 369-381; it reads SAKPKNTKMKTKL.

As to quaternary structure, efficient DNA binding requires dimerization with another bHLH protein. Heterodimer of SIM2 and ARNT. In terms of tissue distribution, transcripts were detected in high levels in kidney followed by skeletal muscle and lung. Low levels were found in testis, brain and heart. In early fetal development it is found in CNS, developing kidney, tongue epithelium and cartilage primordia.

The protein localises to the nucleus. In terms of biological role, transcription factor that may be a master gene of CNS development in cooperation with Arnt. It may have pleiotropic effects in the tissues expressed during development. The polypeptide is Single-minded homolog 2 (Sim2) (Mus musculus (Mouse)).